Here is a 299-residue protein sequence, read N- to C-terminus: ATP synthase gamma chain (299 aa).

It belongs to the ATPase gamma chain family. As to quaternary structure, F-type ATPases have 2 components, CF(1) - the catalytic core - and CF(0) - the membrane proton channel. CF(1) has five subunits: alpha(3), beta(3), gamma(1), delta(1), epsilon(1). CF(0) has three main subunits: a, b and c.

It is found in the cell inner membrane. Its function is as follows. Produces ATP from ADP in the presence of a proton gradient across the membrane. The gamma chain is believed to be important in regulating ATPase activity and the flow of protons through the CF(0) complex. The polypeptide is ATP synthase gamma chain (Rhodospirillum rubrum).